A 267-amino-acid chain; its full sequence is Orotidine 5'-phosphate decarboxylase (267 aa).

Lys93 serves as the catalytic Proton donor.

It belongs to the OMP decarboxylase family. Type 2 subfamily.

It carries out the reaction orotidine 5'-phosphate + H(+) = UMP + CO2. It participates in pyrimidine metabolism; UMP biosynthesis via de novo pathway; UMP from orotate: step 2/2. This is Orotidine 5'-phosphate decarboxylase from Herpetosiphon aurantiacus (strain ATCC 23779 / DSM 785 / 114-95).